We begin with the raw amino-acid sequence, 366 residues long: tRNA/tmRNA (uracil-C(5))-methyltransferase (366 aa).

The S-adenosyl-L-methionine site is built by Gln-190, Tyr-218, Asn-223, Glu-239, and Asp-299. Cys-324 functions as the Nucleophile in the catalytic mechanism. The active-site Proton acceptor is Glu-358.

Belongs to the class I-like SAM-binding methyltransferase superfamily. RNA M5U methyltransferase family. TrmA subfamily.

It catalyses the reaction uridine(54) in tRNA + S-adenosyl-L-methionine = 5-methyluridine(54) in tRNA + S-adenosyl-L-homocysteine + H(+). It carries out the reaction uridine(341) in tmRNA + S-adenosyl-L-methionine = 5-methyluridine(341) in tmRNA + S-adenosyl-L-homocysteine + H(+). Dual-specificity methyltransferase that catalyzes the formation of 5-methyluridine at position 54 (m5U54) in all tRNAs, and that of position 341 (m5U341) in tmRNA (transfer-mRNA). This chain is tRNA/tmRNA (uracil-C(5))-methyltransferase, found in Escherichia coli O157:H7.